The primary structure comprises 50 residues: Insulin (50 aa).

Disulfide bonds link Cys-7-Cys-36, Cys-19-Cys-49, and Cys-35-Cys-40.

The protein belongs to the insulin family. Heterodimer of a B chain and an A chain linked by two disulfide bonds.

It is found in the secreted. Insulin decreases blood glucose concentration. It increases cell permeability to monosaccharides, amino acids and fatty acids. It accelerates glycolysis, the pentose phosphate cycle, and glycogen synthesis in liver. This Katsuwonus pelamis (Skipjack tuna) protein is Insulin (ins).